Consider the following 457-residue polypeptide: MALWGGRFTQAADKRFKDFNDSLRFDYRLAEQDIQGSIGWSKALVKVNVLTVEEQHQLEQALNELLVEVRSNPQAILQDDAEDIHSWVESKLIDKVGNLGKKLHTGRSRNDQVAVDIKLWCKQRVIELQESVRNLQRHLVQTAENTQQAVMPGYTHLQRAQPITFAHWCMAYVEMFDRDYSRLTDAYNRMNTCPLGSGALAGTAYAVDRDSLAHDLGFAFATRNSLDSVSDRDHIVELLSIASLSMAHLSRFAEDMIIFNSGEANFVELSDRVTSGSSLMPQKKNPDACELIRGKTGRVIGSLTSMLITLKGLPLAYNKDMQEDKEGIFDALDTWQNCVDMATFVLDELKVNVERTREAALKGYSNATELADYLVSKGVPFRDSHHIVGETVVYAIEKGKGLEDLTIPEFRQFSEVVGDDVYEILSLQSCLDKRCAKGGVSPLRVAEAIAEAKTRFA.

It belongs to the lyase 1 family. Argininosuccinate lyase subfamily.

It localises to the cytoplasm. It carries out the reaction 2-(N(omega)-L-arginino)succinate = fumarate + L-arginine. Its pathway is amino-acid biosynthesis; L-arginine biosynthesis; L-arginine from L-ornithine and carbamoyl phosphate: step 3/3. In Haemophilus influenzae (strain PittGG), this protein is Argininosuccinate lyase.